The primary structure comprises 499 residues: Glucose-6-phosphate isomerase (499 aa).

Glu352 serves as the catalytic Proton donor. Residues His383 and Lys487 contribute to the active site.

The protein belongs to the GPI family.

Its subcellular location is the cytoplasm. The catalysed reaction is alpha-D-glucose 6-phosphate = beta-D-fructose 6-phosphate. Its pathway is carbohydrate biosynthesis; gluconeogenesis. The protein operates within carbohydrate degradation; glycolysis; D-glyceraldehyde 3-phosphate and glycerone phosphate from D-glucose: step 2/4. Catalyzes the reversible isomerization of glucose-6-phosphate to fructose-6-phosphate. This chain is Glucose-6-phosphate isomerase, found in Legionella pneumophila (strain Lens).